We begin with the raw amino-acid sequence, 571 residues long: Leucine aminopeptidase A2, chloroplastic (571 aa).

Residues 1–42 (MATLRVSSLFASSSSSLHSNPSVFTKYQSSPKWAFSFPVTPL) constitute a chloroplast transit peptide. Residues Lys-342 and Asp-347 each coordinate Mg(2+). Lys-354 is an active-site residue. Mg(2+) contacts are provided by Asp-367, Asp-427, and Glu-429. Residue Arg-431 is part of the active site.

The protein belongs to the peptidase M17 family. As to quaternary structure, homohexamer (dimer of homotrimers). Mg(2+) serves as cofactor. In terms of tissue distribution, expressed during floral development. Expressed in healthy and senescent leaves, cotyledons (emergence from seed coats), pistils, sepals, petals, stamens, and floral buds (at protein level).

Its subcellular location is the plastid. It localises to the chloroplast. It carries out the reaction Release of an N-terminal amino acid, Xaa-|-Yaa-, in which Xaa is preferably Leu, but may be other amino acids including Pro although not Arg or Lys, and Yaa may be Pro. Amino acid amides and methyl esters are also readily hydrolyzed, but rates on arylamides are exceedingly low.. The catalysed reaction is Release of N-terminal proline from a peptide.. Functionally, catalyzes the removal of unsubstituted N-terminal amino acids from various peptides. When associated as homohexamer, catalyzes the proteolyzes of Xaa-Leu dipeptides. Possesses leucine aminopeptidase activity against the model substrate leucine-amido methyl coumarin. Presumably involved in the processing and regular turnover of intracellular proteins. Regulates wound signaling and has a role in insect defense. Functions as a molecular chaperone to protect proteins from heat-induced damage. The protein is Leucine aminopeptidase A2, chloroplastic of Solanum lycopersicum (Tomato).